Reading from the N-terminus, the 37-residue chain is Neuropeptide Y2-like conopeptide (37 aa).

Tyrosine 37 is modified (tyrosine amide).

Belongs to the NPY family. Expressed by the venom duct.

The protein localises to the secreted. Functionally, causes hyperactivity such as jumping, rapid circling and tail flicking, after intraventicular injection into mouse brain. This Conus betulinus (Beech cone) protein is Neuropeptide Y2-like conopeptide.